Here is a 471-residue protein sequence, read N- to C-terminus: MATFPPLSMTRTKLAVLARQKLPCSSKSIPRAQLIKEKDDIDYYLEQNIKGLSKEEVAAHRNSYKKSICVDMLRDGFHKSFTELFSLMEQWDKLREAAQARSLFWLQRPLEDQPDKLDNFYHYLTKAEAAERKGYYEEVYNNLYALACYFDNSEDKWVRNHFYERCFKIAQLIKVDGGKKEAEAEAHMGLLYEEEGELLKAAEHYEAFHELTQGRLWKDATGQFLNLIACESLVRTYRLLSDRMLQNRDYKQAIKILIKASEIAREGNDRSMEGEASYYLGLAHLASGEYETALSVLDRYSEISTSLDDELSLGRAYEAMAKVLQSQGEMTEAIKYLEKFVVIARNNFKSLDVIQACTMLGDIYNEKGQYNKASDYFQQAFSTAMEVTKTTLMDETKVHYGIARAHQMMLTMNGYIESADMNSLNCLLSWKETRTQVEYDPILGEARKATEDNIYQFPDAQEETRRSPENQ.

7 TPR repeats span residues 92–131 (DKLREAAQARSLFWLQRPLEDQPDKLDNFYHYLTKAEAAE), 136–173 (YEEVYNNLYALACYFDNSEDKWVRNHFYERCFKIAQLI), 182–215 (AEAEAHMGLLYEEEGELLKAAEHYEAFHELTQGR), 234–267 (VRTYRLLSDRMLQNRDYKQAIKILIKASEIAREG), 274–307 (GEASYYLGLAHLASGEYETALSVLDRYSEISTSL), 314–347 (GRAYEAMAKVLQSQGEMTEAIKYLEKFVVIARNN), and 354–387 (IQACTMLGDIYNEKGQYNKASDYFQQAFSTAMEV).

It localises to the cytoplasm. The protein resides in the cytoskeleton. Its subcellular location is the flagellum axoneme. Axonemal protein which is implicated in axonemal and/or peri-axonemal structure assembly and regulates flagellum assembly and beating and therefore sperm motility. In Rattus norvegicus (Rat), this protein is Tetratricopeptide repeat protein 29 (Ttc29).